The following is a 338-amino-acid chain: Protein FosB (338 aa).

Disordered regions lie at residues 1 to 54 (MFQA…PGSF) and 80 to 179 (AQSQ…RREL). 2 stretches are compositionally biased toward polar residues: residues 13–31 (SRCS…SVDS) and 102–112 (TSYSTPGLSAY). Residue Ser27 is modified to Phosphoserine. Residues 123 to 137 (PSTSTTTSGPVSARP) show a composition bias toward low complexity. The bZIP domain occupies 155–218 (EEKRRVRRER…ERLEFVLVAH (64 aa)). The segment at 157–182 (KRRVRRERNKLAAAKCRNRRRELTDR) is basic motif. Residues 183 to 211 (LQAETDQLEEEKAELESEIAELQKEKERL) form a leucine-zipper region. Disordered regions lie at residues 222–276 (CKIP…PPNL) and 316–338 (GAQR…LLAL). The span at 256-265 (LPPPPPPPLP) shows a compositional bias: pro residues. Composition is skewed to polar residues over residues 266-276 (FQSSRDAPPNL) and 318-338 (QRTS…LLAL).

This sequence belongs to the bZIP family. Fos subfamily. In terms of assembly, heterodimer; binds to DNA as heterodimer. Component of an AP-1 transcription factor complex; composed of FOS-JUN heterodimers. As part of the AP-1 transcription factor complex, forms heterodimers with JUN, JUNB or JUND, thereby binding to the AP-1 consensus sequence and stimulating transcription. Interacts with the BAF multiprotein chromatin-remodeling complex subunits SMARCB1 and SMARCD1. Interacts with ARID1A and JUN. As to quaternary structure, homodimer under oxidizing conditions and monomer under reducing conditions (in vitro). Heterodimer; binds to DNA as heterodimer. Forms heterodimers with JUNB, JUN or JUND; thereby binding to the AP-1 consensus sequence but does not stimulate transcription. Forms heterodimers with JUND under oxidizing conditions. In terms of processing, phosphorylated. Post-translationally, phosphorylated at Ser-27 by CSNK2A1; phosphorylation increases protein stability and transactivation potential. In terms of tissue distribution, expressed in brain, including the preoptic area of the hypothalamus, the main and accessory olfactory bulbs, the pyriform cortex and the hippocampus (at protein level). Expressed in the neurons of the subgranular zone of the dentate gyrus in the hippocampus (at protein level). Expressed in pyramidal cells in CA1 and CA3, in the dentate gyrus and the nucleus accumbens of the striatum (at protein level). As to expression, expressed in the core and shell of the nucleus accumbens of the striatum (at protein level). Expressed in the neurons of the subgranular zone of the dentate gyrus in the hippocampus (at protein level).

Its subcellular location is the nucleus. Functionally, heterodimerizes with proteins of the JUN family to form an AP-1 transcription factor complex, thereby enhancing their DNA binding activity to gene promoters containing an AP-1 consensus sequence 5'-TGA[GC]TCA-3' and enhancing their transcriptional activity. As part of the AP-1 complex, facilitates enhancer selection together with cell-type-specific transcription factors by collaboratively binding to nucleosomal enhancers and recruiting the SWI/SNF (BAF) chromatin remodeling complex to establish accessible chromatin. Together with JUN, plays a role in activation-induced cell death of T cells by binding to the AP-1 promoter site of FASLG/CD95L, and inducing its transcription in response to activation of the TCR/CD3 signaling pathway. Exhibits transactivation activity in vitro. Involved in the display of nurturing behavior towards newborns. May play a role in neurogenesis in the hippocampus and in learning and memory-related tasks by regulating the expression of various genes involved in neurogenesis, depression and epilepsy. Implicated in behavioral responses related to morphine reward and spatial memory. Its function is as follows. Exhibits lower transactivation activity than isoform 1 in vitro. The heterodimer with JUN does not display any transcriptional activity, and may thereby act as an transcriptional inhibitor. May be involved in the regulation of neurogenesis in the hippocampus. May play a role in synaptic modifications in nucleus accumbens medium spiny neurons and thereby play a role in adaptive and pathological reward-dependent learning, including maladaptive responses involved in drug addiction. Seems to be more stably expressed with a half-life of ~9.5 hours in cell culture as compared to 1.5 hours half-life of isoform 1. This is Protein FosB from Mus musculus (Mouse).